The sequence spans 309 residues: tRNA uridine(34) hydroxylase (309 aa).

Residues 129 to 223 (SEPGTIVIDT…YLEEVPAEQS (95 aa)) enclose the Rhodanese domain. The Cysteine persulfide intermediate role is filled by Cys183. Residues 288–309 (YAERQRQVELAQARGKRPHIGS) are disordered.

Belongs to the TrhO family.

The enzyme catalyses uridine(34) in tRNA + AH2 + O2 = 5-hydroxyuridine(34) in tRNA + A + H2O. Catalyzes oxygen-dependent 5-hydroxyuridine (ho5U) modification at position 34 in tRNAs. This Mesorhizobium japonicum (strain LMG 29417 / CECT 9101 / MAFF 303099) (Mesorhizobium loti (strain MAFF 303099)) protein is tRNA uridine(34) hydroxylase.